We begin with the raw amino-acid sequence, 486 residues long: MAIAEWRQQLKLGEVSARELTDHQLARIAVVDPTLHAFLDITADRARADADRIDEALAAGESLPPLAGVPLAIKDNLCTKGIRTTCSSRMLETFVPPYESTVTERLWQAGAVLLGKTNLDEFAMGSSTETSAFGATSNPWDISRVPGGSSGGSAAAVAAGECMAALGSDTGGSIRQPASFCGVVGLKPTYGRVSRWGLVAFASSLDQVGPFTTNVADAAELLQVIAGSDPRDSTCLNVAVPDYCSALSQPMSGVRIGLIRECFDQNGLDAQVKRTVLTAAEKLQSLGAELVEVSCPRFSDGIATYYVIAPSEASANLARYDGVKYGYRAEGADALAAMTARSRAEGFGSEVQRRILIGTYALSAGYMDAYYKKAQQVRTLIRQDFDAAFQTVDVLLTPTSPTTAFKAGAHADDPLAMYLADLLTIPANLAGLPAISLPCGFDDDGLPIGVQLIANVLEESRLLQVAFHYEQAANVMANHPQGNFIP.

Residues K74 and S149 each act as charge relay system in the active site. The active-site Acyl-ester intermediate is the S173.

The protein belongs to the amidase family. GatA subfamily. As to quaternary structure, heterotrimer of A, B and C subunits.

It catalyses the reaction L-glutamyl-tRNA(Gln) + L-glutamine + ATP + H2O = L-glutaminyl-tRNA(Gln) + L-glutamate + ADP + phosphate + H(+). Functionally, allows the formation of correctly charged Gln-tRNA(Gln) through the transamidation of misacylated Glu-tRNA(Gln) in organisms which lack glutaminyl-tRNA synthetase. The reaction takes place in the presence of glutamine and ATP through an activated gamma-phospho-Glu-tRNA(Gln). This is Glutamyl-tRNA(Gln) amidotransferase subunit A from Prochlorococcus marinus (strain MIT 9313).